We begin with the raw amino-acid sequence, 217 residues long: Phosphatase MT3486 (217 aa).

Asp-9 (nucleophile) is an active-site residue.

It belongs to the HAD-like hydrolase superfamily.

In terms of biological role, able to hydrolyze geranyl diphosphate (GPP), farnesyl diphosphate (FPP) and geranylgeranyl diphosphate (GGPP) to respectively yield geraniol, farnesol and geranylgeraniol. This is Phosphatase MT3486 from Mycobacterium tuberculosis (strain CDC 1551 / Oshkosh).